Reading from the N-terminus, the 122-residue chain is Probable DNA-directed RNA polymerase II subunit RPB11 (122 aa).

This sequence belongs to the archaeal Rpo11/eukaryotic RPB11/RPC19 RNA polymerase subunit family. Component of the RNA polymerase II (Pol II) complex consisting of 12 subunits.

Its subcellular location is the nucleus. Functionally, DNA-dependent RNA polymerase catalyzes the transcription of DNA into RNA using the four ribonucleoside triphosphates as substrates. Component of RNA polymerase II which synthesizes mRNA precursors and many functional non-coding RNAs. Pol II is the central component of the basal RNA polymerase II transcription machinery. It is composed of mobile elements that move relative to each other. RPB11 is part of the core element with the central large cleft. The chain is Probable DNA-directed RNA polymerase II subunit RPB11 (rpb-11) from Caenorhabditis briggsae.